Here is a 468-residue protein sequence, read N- to C-terminus: Protein wingless (468 aa).

The signal sequence occupies residues 1–17 (MDISYIFVICLMALCSG). Positions 83–106 (VKGANLAISECQHQFRNRRWNCST) are binds porcupine. Residues Cys93 and Cys104 are joined by a disulfide bond. N-linked (GlcNAc...) asparagine glycosylation is found at Asn103 and Asn108. Disulfide bonds link Cys146-Cys154, Cys156-Cys185, Cys233-Cys247, and Cys235-Cys242. Ser239 carries O-palmitoleoyl serine; by PORCN lipidation. Positions 333–362 (ISKIHHPNMPSPNSLPQAGQRGGRNGRRQG) are disordered. Intrachain disulfides connect Cys397–Cys428, Cys413–Cys423, Cys427–Cys467, Cys443–Cys458, Cys445–Cys455, and Cys450–Cys451. N-linked (GlcNAc...) asparagine glycosylation occurs at Asn414.

Belongs to the Wnt family. Monomer; folds by intramolecular disulfide bonds. Interacts with porcupine (por). Interacts with wls; in the Golgi. Interacts with en. Interacts with the proteoglycan Cow (heparan sulfate-bound form); this stabilizes wg and promotes its extracellular distribution. Interacts with peg; the interaction facilitates short-range diffusion of wg. Post-translationally, palmitoleoylated by porcupine. The lipid group functions as a sorting signal, targeting the ligand to polarized vesicles that transport wg to unique sites at the cell surface. Depalmitoleoylated by notum, leading to inhibit Wnt signaling pathway. Major form is glycosylated at 2 sites, glycosylation is stimulated by porcupine at the ER. Segmented expression in embryos. In embryonic tracheal cells, expression is in stripes flanking the tracheal placode.

Its subcellular location is the secreted. The protein localises to the synapse. The protein resides in the membrane. It localises to the extracellular space. It is found in the extracellular matrix. Binds as a ligand to a family of frizzled seven-transmembrane receptors and acts through a cascade of genes on the nucleus. Segment polarity protein. May be a growth factor. Acts on neighboring cells to regulate at least one gene, the homeobox segmentation gene engrailed. Wg signal represses arm phosphorylation. Wg signaling operates by inactivating the sgg repression of engrailed autoactivation. Wg and Wnt2 have a role in the developing trachea and together are responsible for all dorsal trunk formation. Wg also acts in the developing epidermis. Acts as a morphogen, and diffuses long distances despite its lipidation. Lipophorin is required for diffusion, probably by acting as vehicle for its movement, explaining how it can spread over long distances despite its lipidation. In non-neuronal cells, wls directs wg secretion via clathrin-mediated endocytosis and the retromer complex (a conserved protein complex consisting of Vps26 and Vps35) to sustain a wls traffic loop encompassing the Golgi, the cell surface, an endocytic compartment and a retrograde route leading back to the Golgi. In neuronal cells (the larval motorneuron NMJ), wg signal moves across the synapse through the release of wls-containing exosome-like vesicles. The chain is Protein wingless (wg) from Drosophila melanogaster (Fruit fly).